The primary structure comprises 282 residues: NAD kinase (282 aa).

Residue Asp67 is the Proton acceptor of the active site. Residues 67–68 (DG), 140–141 (NE), His151, Arg170, Asp172, and 183–188 (TAYNLS) contribute to the NAD(+) site.

This sequence belongs to the NAD kinase family. The cofactor is a divalent metal cation.

It localises to the cytoplasm. It catalyses the reaction NAD(+) + ATP = ADP + NADP(+) + H(+). Involved in the regulation of the intracellular balance of NAD and NADP, and is a key enzyme in the biosynthesis of NADP. Catalyzes specifically the phosphorylation on 2'-hydroxyl of the adenosine moiety of NAD to yield NADP. In Halobacterium salinarum (strain ATCC 700922 / JCM 11081 / NRC-1) (Halobacterium halobium), this protein is NAD kinase.